The chain runs to 267 residues: MLKIAMIGCGAIGASVLELLHGDSDVVVDRVITVPEARDRTEIAVARWAPRARVLEVLAADDAPDLVVECAGHGAIAAHVVPALERGIPCVVTSVGALSAPGMAQLLEQAARRGKTQVQLLSGAIGGIDALAAARVGGLDSVVYTGRKPPMAWKGTPAEAVCDLDSLTVAHCIFDGSAEQAAQLYPKNANVAATLSLAGLGLKRTQVQLFADPGVSENVHHVAAHGAFGSFELTMRGRPLAANPKTSALTVYSVVRALLNRGRALVI.

NAD(+)-binding residues include Ala-124 and Asn-190. Residue His-220 is part of the active site.

This sequence belongs to the L-aspartate dehydrogenase family.

It catalyses the reaction L-aspartate + NADP(+) + H2O = oxaloacetate + NH4(+) + NADPH + H(+). The catalysed reaction is L-aspartate + NAD(+) + H2O = oxaloacetate + NH4(+) + NADH + H(+). Its pathway is cofactor biosynthesis; NAD(+) biosynthesis; iminoaspartate from L-aspartate (dehydrogenase route): step 1/1. Functionally, specifically catalyzes the NAD or NADP-dependent dehydrogenation of L-aspartate to iminoaspartate. The sequence is that of L-aspartate dehydrogenase from Polaromonas sp. (strain JS666 / ATCC BAA-500).